We begin with the raw amino-acid sequence, 136 residues long: HTH-type transcriptional regulator LrpA (136 aa).

Residues I2–S63 form the HTH asnC-type domain. A DNA-binding region (H-T-H motif) is located at residues M21 to V40.

Functionally, negative regulation of glyA transcription and kinB-dependent sporulation. The polypeptide is HTH-type transcriptional regulator LrpA (lrpA) (Bacillus subtilis (strain 168)).